The primary structure comprises 218 residues: Small ribosomal subunit protein uS3c (218 aa).

Residues 47 to 118 (VQKNMRTSSG…KLNIAVTRIA (72 aa)) enclose the KH type-2 domain.

The protein belongs to the universal ribosomal protein uS3 family. In terms of assembly, part of the 30S ribosomal subunit.

It is found in the plastid. The protein resides in the chloroplast. This chain is Small ribosomal subunit protein uS3c (rps3), found in Solanum lycopersicum (Tomato).